A 319-amino-acid chain; its full sequence is Protein MGF 360-8L (319 aa).

Belongs to the asfivirus MGF 360 family.

Plays a role in virus cell tropism, and may be required for efficient virus replication in macrophages. This is Protein MGF 360-8L from Ornithodoros (relapsing fever ticks).